The chain runs to 444 residues: Forkhead box protein F2 (444 aa).

The segment at 32–98 is disordered; it reads PAAAAAAAAA…KKASSGLRRP (67 aa). Over residues 34 to 75 the composition is skewed to low complexity; sequence AAAAAAAAPETTSSSSSSSSASCASSSSSSNSASAPSAACKS. The span at 76-87 shows a compositional bias: gly residues; the sequence is AGGGGAGAGSGG. The fork-head DNA-binding region spans 99–190; the sequence is EKPPYSYIAL…EFMFEEGSFR (92 aa). 2 disordered regions span residues 256-323 and 338-367; these read GAGA…SPAM and AHWSSPGASPYLKQPPALTPSSNPAASAGL. Residues 263 to 274 show a composition bias toward basic residues; sequence AHPHHHHHHHVP. Over residues 293–308 the composition is skewed to gly residues; it reads GPGGVGAAGGGGGGDY. Residues 309–323 show a composition bias toward low complexity; it reads GPDSSSSPVPSSPAM.

Interacts with the transcription factors TBP and TFIIB. Lung and placenta. Predominantly expressed in gastrointestinal tract including stomach.

It is found in the nucleus. In terms of biological role, probable transcription activator for a number of lung-specific genes. Mediates up-regulation of the E3 ligase IRF2BPL and drives ubiquitination and degradation of CTNNB1. In Homo sapiens (Human), this protein is Forkhead box protein F2 (FOXF2).